The chain runs to 36 residues: Hemoglobin subunit beta (36 aa).

Positions Val-1–His-36 constitute a Globin domain. The residue at position 34 (Lys-34) is an N6-acetyllysine.

The protein belongs to the globin family. As to quaternary structure, heterotetramer of two alpha chains and two beta chains. Red blood cells.

Functionally, involved in oxygen transport from the lung to the various peripheral tissues. The protein is Hemoglobin subunit beta (HBB) of Pongo pygmaeus (Bornean orangutan).